The chain runs to 361 residues: Phosphoserine aminotransferase (361 aa).

Arg-43 provides a ligand contact to L-glutamate. Residues 77–78, Trp-103, Thr-153, Asp-173, and Gln-196 each bind pyridoxal 5'-phosphate; that span reads AS. N6-(pyridoxal phosphate)lysine is present on Lys-197. 238–239 contributes to the pyridoxal 5'-phosphate binding site; the sequence is NT.

It belongs to the class-V pyridoxal-phosphate-dependent aminotransferase family. SerC subfamily. Homodimer. Requires pyridoxal 5'-phosphate as cofactor.

It is found in the cytoplasm. The catalysed reaction is O-phospho-L-serine + 2-oxoglutarate = 3-phosphooxypyruvate + L-glutamate. It catalyses the reaction 4-(phosphooxy)-L-threonine + 2-oxoglutarate = (R)-3-hydroxy-2-oxo-4-phosphooxybutanoate + L-glutamate. It functions in the pathway amino-acid biosynthesis; L-serine biosynthesis; L-serine from 3-phospho-D-glycerate: step 2/3. It participates in cofactor biosynthesis; pyridoxine 5'-phosphate biosynthesis; pyridoxine 5'-phosphate from D-erythrose 4-phosphate: step 3/5. Catalyzes the reversible conversion of 3-phosphohydroxypyruvate to phosphoserine and of 3-hydroxy-2-oxo-4-phosphonooxybutanoate to phosphohydroxythreonine. This is Phosphoserine aminotransferase from Pseudomonas entomophila (strain L48).